Reading from the N-terminus, the 353-residue chain is UPF0283 membrane protein YPTS_2342 (353 aa).

3 consecutive transmembrane segments (helical) span residues 71 to 91, 101 to 121, and 214 to 234; these read MVTAGMVILGASVIAQSVQWV, IALGATTAGGLIILAGVGSVV, and ESALMIAVSPLALVDMAFIAW.

This sequence belongs to the UPF0283 family.

It is found in the cell inner membrane. This Yersinia pseudotuberculosis serotype IB (strain PB1/+) protein is UPF0283 membrane protein YPTS_2342.